The chain runs to 5141 residues: SCO-spondin (5141 aa).

Positions methionine 1–glycine 17 are cleaved as a signal peptide. Residues histidine 18–histidine 102 form the EMI domain. N-linked (GlcNAc...) asparagine glycosylation is found at asparagine 88, asparagine 130, asparagine 150, and asparagine 167. The VWFD 1 domain occupies alanine 193–leucine 364. 3 cysteine pairs are disulfide-bonded: cysteine 195-cysteine 325, cysteine 217-cysteine 363, and cysteine 239-cysteine 245. Positions cysteine 472–cysteine 527 constitute a TIL 1 domain. The VWFD 2 domain occupies alanine 565–proline 738. Cystine bridges form between cysteine 567/cysteine 700 and cysteine 591/cysteine 737. Residues asparagine 657 and asparagine 822 are each glycosylated (N-linked (GlcNAc...) asparagine). Residues cysteine 830 to cysteine 883 enclose the TIL 2 domain. 3 N-linked (GlcNAc...) asparagine glycosylation sites follow: asparagine 895, asparagine 949, and asparagine 991. The region spanning glycine 1017–proline 1187 is the VWFD 3 domain. Disulfide bonds link cysteine 1019–cysteine 1151, cysteine 1041–cysteine 1186, and cysteine 1062–cysteine 1069. Residues cysteine 1280–cysteine 1336 form the TIL 3 domain. A glycan (N-linked (GlcNAc...) asparagine) is linked at asparagine 1357. 4 LDL-receptor class A domains span residues glycine 1380–aspartate 1417, valine 1420–leucine 1456, leucine 1456–leucine 1492, and serine 1496–serine 1534. Cystine bridges form between cysteine 1381/cysteine 1394, cysteine 1388/cysteine 1407, cysteine 1401/cysteine 1416, cysteine 1421/cysteine 1433, cysteine 1428/cysteine 1446, cysteine 1440/cysteine 1455, cysteine 1457/cysteine 1469, cysteine 1464/cysteine 1482, cysteine 1476/cysteine 1491, cysteine 1497/cysteine 1509, cysteine 1504/cysteine 1522, and cysteine 1516/cysteine 1533. Positions cysteine 1533–alanine 1567 are disordered. Residues proline 1549–alanine 1567 are compositionally biased toward low complexity. LDL-receptor class A domains lie at proline 1569–glycine 1605 and proline 1607–glutamate 1646. Intrachain disulfides connect cysteine 1570/cysteine 1582, cysteine 1577/cysteine 1595, cysteine 1589/cysteine 1604, cysteine 1608/cysteine 1621, cysteine 1615/cysteine 1634, and cysteine 1628/cysteine 1645. N-linked (GlcNAc...) asparagine glycosylation is found at asparagine 1655 and asparagine 1668. In terms of domain architecture, LDL-receptor class A 7 spans proline 1660 to glycine 1700. 9 disulfide bridges follow: cysteine 1661–cysteine 1671, cysteine 1666–cysteine 1684, cysteine 1678–cysteine 1699, cysteine 1711–cysteine 1747, cysteine 1715–cysteine 1752, cysteine 1726–cysteine 1737, cysteine 1767–cysteine 1964, cysteine 1771–cysteine 1969, and cysteine 1781–cysteine 1791. TSP type-1 domains follow at residues cysteine 1699–proline 1753 and aspartate 1755–glutamate 1970. An N-linked (GlcNAc...) asparagine glycan is attached at asparagine 1725. N-linked (GlcNAc...) asparagine glycosylation is present at asparagine 1814. EGF-like domains follow at residues cysteine 1829–valine 1868 and arginine 1869–cysteine 1895. Residues glutamate 1970–alanine 2030 form the VWFC 1 domain. N-linked (GlcNAc...) asparagine glycosylation occurs at asparagine 2035. Disulfide bonds link cysteine 2070–cysteine 2226, cysteine 2236–cysteine 2248, cysteine 2243–cysteine 2261, and cysteine 2255–cysteine 2270. Residues cysteine 2070–cysteine 2226 form the F5/8 type C domain. Residues proline 2087–aspartate 2109 are disordered. Asparagine 2130 and asparagine 2148 each carry an N-linked (GlcNAc...) asparagine glycan. One can recognise an LDL-receptor class A 8 domain in the interval leucine 2235–glycine 2271. The tract at residues glutamate 2262–proline 2335 is disordered. Positions serine 2276 to glutamine 2294 are enriched in polar residues. Positions histidine 2301–proline 2314 are enriched in basic and acidic residues. 2 consecutive LDL-receptor class A domains span residues arginine 2391–alanine 2427 and leucine 2448–valine 2484. Disulfide bonds link cysteine 2392–cysteine 2404, cysteine 2399–cysteine 2417, cysteine 2411–cysteine 2426, cysteine 2449–cysteine 2461, cysteine 2456–cysteine 2474, cysteine 2468–cysteine 2483, cysteine 2486–cysteine 2522, cysteine 2497–cysteine 2501, cysteine 2532–cysteine 2537, cysteine 2552–cysteine 2589, cysteine 2556–cysteine 2594, and cysteine 2567–cysteine 2579. 2 consecutive TSP type-1 domains span residues aspartate 2485–proline 2538 and alanine 2540–proline 2595. The region spanning proline 2618–cysteine 2660 is the TIL 4 domain. 2 N-linked (GlcNAc...) asparagine glycosylation sites follow: asparagine 2630 and asparagine 2679. 3 TSP type-1 domains span residues serine 2700 to glycine 2754, proline 2758 to proline 2813, and proline 2815 to threonine 2868. Intrachain disulfides connect cysteine 2701–cysteine 2739, cysteine 2712–cysteine 2716, cysteine 2749–cysteine 2753, cysteine 2769–cysteine 2807, cysteine 2773–cysteine 2812, cysteine 2789–cysteine 2797, cysteine 2827–cysteine 2862, cysteine 2831–cysteine 2867, and cysteine 2842–cysteine 2852. Residues asparagine 2921 and asparagine 2951 are each glycosylated (N-linked (GlcNAc...) asparagine). 2 TSP type-1 domains span residues alanine 2969–glutamine 3024 and glycine 3025–alanine 3068. 3 disulfides stabilise this stretch: cysteine 2970/cysteine 3008, cysteine 2981/cysteine 2985, and cysteine 3018/cysteine 3023. 4 N-linked (GlcNAc...) asparagine glycosylation sites follow: asparagine 3046, asparagine 3101, asparagine 3148, and asparagine 3158. The region spanning cysteine 3075–cysteine 3127 is the TIL 5 domain. TSP type-1 domains are found at residues glutamine 3168–asparagine 3235 and alanine 3237–proline 3292. 6 disulfides stabilise this stretch: cysteine 3180–cysteine 3229, cysteine 3184–cysteine 3234, cysteine 3195–cysteine 3219, cysteine 3249–cysteine 3286, cysteine 3253–cysteine 3291, and cysteine 3264–cysteine 3276. Asparagine 3295 carries an N-linked (GlcNAc...) asparagine glycan. Residues glutamate 3300 to cysteine 3350 form the TIL 6 domain. N-linked (GlcNAc...) asparagine glycosylation occurs at asparagine 3384. 2 consecutive TSP type-1 domains span residues serine 3393–proline 3455 and aspartate 3457–threonine 3512. 6 disulfide bridges follow: cysteine 3405-cysteine 3448, cysteine 3409-cysteine 3454, cysteine 3420-cysteine 3432, cysteine 3469-cysteine 3504, cysteine 3472-cysteine 3511, and cysteine 3482-cysteine 3494. A glycan (N-linked (GlcNAc...) asparagine) is linked at asparagine 3506. Residues cysteine 3514–cysteine 3570 form the TIL 7 domain. 2 N-linked (GlcNAc...) asparagine glycosylation sites follow: asparagine 3584 and asparagine 3611. In terms of domain architecture, TSP type-1 14 spans proline 3630–arginine 3678. Cystine bridges form between cysteine 3642–cysteine 3672, cysteine 3646–cysteine 3677, and cysteine 3657–cysteine 3662. Asparagine 3787 carries N-linked (GlcNAc...) asparagine glycosylation. 4 consecutive TSP type-1 domains span residues arginine 3806–proline 3862, alanine 3876–threonine 3928, asparagine 3942–proline 3998, and proline 4000–glutamate 4055. Cystine bridges form between cysteine 3818–cysteine 3856, cysteine 3822–cysteine 3861, and cysteine 3834–cysteine 3846. A glycan (N-linked (GlcNAc...) asparagine) is linked at asparagine 3910. Intrachain disulfides connect cysteine 3943-cysteine 3979, cysteine 3954-cysteine 3958, cysteine 3992-cysteine 3997, cysteine 4012-cysteine 4049, cysteine 4016-cysteine 4054, and cysteine 4027-cysteine 4039. Residues cysteine 4058–cysteine 4113 enclose the TIL 8 domain. N-linked (GlcNAc...) asparagine glycosylation is present at asparagine 4135. TSP type-1 domains follow at residues histidine 4155–proline 4208, proline 4249–leucine 4304, leucine 4306–glutamine 4362, and aspartate 4364–serine 4418. 6 cysteine pairs are disulfide-bonded: cysteine 4156/cysteine 4192, cysteine 4167/cysteine 4171, cysteine 4202/cysteine 4207, cysteine 4261/cysteine 4298, cysteine 4265/cysteine 4303, and cysteine 4276/cysteine 4288. The N-linked (GlcNAc...) asparagine glycan is linked to asparagine 4345. Cystine bridges form between cysteine 4365–cysteine 4402, cysteine 4376–cysteine 4378, and cysteine 4412–cysteine 4417. A glycan (N-linked (GlcNAc...) asparagine) is linked at asparagine 4416. Positions cysteine 4422 to cysteine 4477 constitute a TIL 9 domain. A glycan (N-linked (GlcNAc...) asparagine) is linked at asparagine 4557. Residues threonine 4608–proline 4659 form the TSP type-1 23 domain. 3 disulfide bridges follow: cysteine 4609–cysteine 4643, cysteine 4620–cysteine 4624, and cysteine 4653–cysteine 4658. One can recognise a TIL 10 domain in the interval aspartate 4673–cysteine 4719. Asparagine 4727, asparagine 4744, and asparagine 4749 each carry an N-linked (GlcNAc...) asparagine glycan. Residues cysteine 4759 to proline 4812 form the TSP type-1 24 domain. 3 cysteine pairs are disulfide-bonded: cysteine 4771/cysteine 4806, cysteine 4775/cysteine 4811, and cysteine 4786/cysteine 4795. The 55-residue stretch at cysteine 4814–cysteine 4868 folds into the TIL 11 domain. N-linked (GlcNAc...) asparagine glycans are attached at residues asparagine 4899, asparagine 4942, and asparagine 4949. The region spanning cysteine 4920 to cysteine 4978 is the TIL 12 domain. The VWFC 2 domain maps to cysteine 4978–glutamine 5036. 4 disulfide bridges follow: cysteine 5047–cysteine 5095, cysteine 5061–cysteine 5112, cysteine 5071–cysteine 5128, and cysteine 5075–cysteine 5130. The CTCK domain maps to cysteine 5047–glutamine 5134. Residue asparagine 5055 is glycosylated (N-linked (GlcNAc...) asparagine).

Belongs to the thrombospondin family.

The protein localises to the secreted. The protein resides in the extracellular space. Involved in the modulation of neuronal aggregation. May be involved in developmental events during the formation of the central nervous system. This is SCO-spondin from Rattus norvegicus (Rat).